Here is a 156-residue protein sequence, read N- to C-terminus: Small ribosomal subunit protein uS7 (156 aa).

It belongs to the universal ribosomal protein uS7 family. In terms of assembly, part of the 30S ribosomal subunit. Contacts proteins S9 and S11.

One of the primary rRNA binding proteins, it binds directly to 16S rRNA where it nucleates assembly of the head domain of the 30S subunit. Is located at the subunit interface close to the decoding center, probably blocks exit of the E-site tRNA. The sequence is that of Small ribosomal subunit protein uS7 from Nitrosomonas eutropha (strain DSM 101675 / C91 / Nm57).